The chain runs to 433 residues: Adenosylhomocysteinase B (433 aa).

Substrate is bound by residues Thr57, Asp132, Glu157, Lys187, and Asp191. The NAD binding stretch occupies residues 184–351; that stretch reads SVTKSKFDNL…EGRLVNLGCA (168 aa).

This sequence belongs to the adenosylhomocysteinase family. In terms of assembly, homotetramer. NAD(+) is required as a cofactor.

The protein resides in the cytoplasm. The enzyme catalyses S-adenosyl-L-homocysteine + H2O = L-homocysteine + adenosine. It participates in amino-acid biosynthesis; L-homocysteine biosynthesis; L-homocysteine from S-adenosyl-L-homocysteine: step 1/1. Its function is as follows. Catalyzes the hydrolysis of S-adenosyl-L-homocysteine to form adenosine and homocysteine. Binds copper ions. The protein is Adenosylhomocysteinase B (ahcy-b) of Xenopus laevis (African clawed frog).